The chain runs to 380 residues: Tryptophan--tRNA ligase 2 (380 aa).

The 'HIGH' region motif lies at 74–82; it reads PSGPMHLGH. The short motif at 249–253 is the 'KMSKS' region element; it reads KMSSS.

It belongs to the class-I aminoacyl-tRNA synthetase family.

It is found in the cytoplasm. The enzyme catalyses tRNA(Trp) + L-tryptophan + ATP = L-tryptophyl-tRNA(Trp) + AMP + diphosphate + H(+). This chain is Tryptophan--tRNA ligase 2, found in Halobacterium salinarum (strain ATCC 700922 / JCM 11081 / NRC-1) (Halobacterium halobium).